Here is a 1377-residue protein sequence, read N- to C-terminus: DNA-directed RNA polymerase subunit beta (1377 aa).

Belongs to the RNA polymerase beta chain family. In terms of assembly, the RNAP catalytic core consists of 2 alpha, 1 beta, 1 beta' and 1 omega subunit. When a sigma factor is associated with the core the holoenzyme is formed, which can initiate transcription.

It carries out the reaction RNA(n) + a ribonucleoside 5'-triphosphate = RNA(n+1) + diphosphate. Its function is as follows. DNA-dependent RNA polymerase catalyzes the transcription of DNA into RNA using the four ribonucleoside triphosphates as substrates. This chain is DNA-directed RNA polymerase subunit beta, found in Aromatoleum aromaticum (strain DSM 19018 / LMG 30748 / EbN1) (Azoarcus sp. (strain EbN1)).